The sequence spans 137 residues: Large ribosomal subunit protein uL16 (137 aa).

Belongs to the universal ribosomal protein uL16 family. Part of the 50S ribosomal subunit.

Binds 23S rRNA and is also seen to make contacts with the A and possibly P site tRNAs. The sequence is that of Large ribosomal subunit protein uL16 from Wolbachia sp. subsp. Brugia malayi (strain TRS).